The chain runs to 595 residues: Elongation factor 4 (595 aa).

In terms of domain architecture, tr-type G spans 2-184; sequence ETIRNFSIIA…TITHNIPYPK (183 aa). GTP is bound by residues 14 to 19 and 131 to 134; these read DHGKST and NKID.

Belongs to the TRAFAC class translation factor GTPase superfamily. Classic translation factor GTPase family. LepA subfamily.

Its subcellular location is the cell membrane. It carries out the reaction GTP + H2O = GDP + phosphate + H(+). Its function is as follows. Required for accurate and efficient protein synthesis under certain stress conditions. May act as a fidelity factor of the translation reaction, by catalyzing a one-codon backward translocation of tRNAs on improperly translocated ribosomes. Back-translocation proceeds from a post-translocation (POST) complex to a pre-translocation (PRE) complex, thus giving elongation factor G a second chance to translocate the tRNAs correctly. Binds to ribosomes in a GTP-dependent manner. In Buchnera aphidicola subsp. Baizongia pistaciae (strain Bp), this protein is Elongation factor 4.